A 45-amino-acid chain; its full sequence is Large ribosomal subunit protein bL34 (45 aa).

It belongs to the bacterial ribosomal protein bL34 family.

The sequence is that of Large ribosomal subunit protein bL34 from Frankia casuarinae (strain DSM 45818 / CECT 9043 / HFP020203 / CcI3).